The sequence spans 344 residues: Geranylgeranyl pyrophosphate synthase 10, mitochondrial (344 aa).

Residues 1–40 (MENREVFVYIVISIFRSLQFLFWRFRPRYNDVTSALTRPL) constitute a mitochondrion transit peptide. Lys91, Arg94, and His123 together coordinate isopentenyl diphosphate. Residues Asp130 and Asp136 each contribute to the Mg(2+) site. Arg141 contributes to the dimethylallyl diphosphate binding site. Arg142 provides a ligand contact to isopentenyl diphosphate. Dimethylallyl diphosphate-binding residues include Lys229, Thr230, Gln267, Lys284, and Lys294.

It belongs to the FPP/GGPP synthase family. As to quaternary structure, monomer. Mg(2+) is required as a cofactor.

The protein localises to the mitochondrion. It catalyses the reaction isopentenyl diphosphate + dimethylallyl diphosphate = (2E)-geranyl diphosphate + diphosphate. The enzyme catalyses isopentenyl diphosphate + (2E)-geranyl diphosphate = (2E,6E)-farnesyl diphosphate + diphosphate. It carries out the reaction isopentenyl diphosphate + (2E,6E)-farnesyl diphosphate = (2E,6E,10E)-geranylgeranyl diphosphate + diphosphate. It functions in the pathway isoprenoid biosynthesis; farnesyl diphosphate biosynthesis; farnesyl diphosphate from geranyl diphosphate and isopentenyl diphosphate: step 1/1. Its pathway is isoprenoid biosynthesis; geranyl diphosphate biosynthesis; geranyl diphosphate from dimethylallyl diphosphate and isopentenyl diphosphate: step 1/1. It participates in isoprenoid biosynthesis; geranylgeranyl diphosphate biosynthesis; geranylgeranyl diphosphate from farnesyl diphosphate and isopentenyl diphosphate: step 1/1. Catalyzes the trans-addition of the three molecules of IPP onto DMAPP to form geranylgeranyl pyrophosphate. In Arabidopsis thaliana (Mouse-ear cress), this protein is Geranylgeranyl pyrophosphate synthase 10, mitochondrial.